Here is a 380-residue protein sequence, read N- to C-terminus: Chaperone protein DnaJ (380 aa).

In terms of domain architecture, J spans 5 to 70 (DFYEVLGVSK…NLRARYDQYG (66 aa)). The CR-type zinc-finger motif lies at 135 to 213 (GVSKEIKVPS…CHGEGRYQKT (79 aa)). The Zn(2+) site is built by cysteine 148, cysteine 151, cysteine 165, cysteine 168, cysteine 187, cysteine 190, cysteine 201, and cysteine 204. 4 CXXCXGXG motif repeats span residues 148-155 (CEVCNGSG), 165-172 (CPTCHGAG), 187-194 (CPHCHGRG), and 201-208 (CRKCHGEG).

The protein belongs to the DnaJ family. Homodimer. Requires Zn(2+) as cofactor.

It localises to the cytoplasm. Its function is as follows. Participates actively in the response to hyperosmotic and heat shock by preventing the aggregation of stress-denatured proteins and by disaggregating proteins, also in an autonomous, DnaK-independent fashion. Unfolded proteins bind initially to DnaJ; upon interaction with the DnaJ-bound protein, DnaK hydrolyzes its bound ATP, resulting in the formation of a stable complex. GrpE releases ADP from DnaK; ATP binding to DnaK triggers the release of the substrate protein, thus completing the reaction cycle. Several rounds of ATP-dependent interactions between DnaJ, DnaK and GrpE are required for fully efficient folding. Also involved, together with DnaK and GrpE, in the DNA replication of plasmids through activation of initiation proteins. The protein is Chaperone protein DnaJ of Aeromonas salmonicida (strain A449).